A 378-amino-acid chain; its full sequence is Protein-glutamate methylesterase/protein-glutamine glutaminase 2 (378 aa).

The Response regulatory domain maps to 4–121 (KVLVVDDSGF…SRNPEKVKQL (118 aa)). D55 carries the post-translational modification 4-aspartylphosphate. The interval 141-188 (APAPAAAPTPAPIPAAAPSSFGSHSAPARPAPAPAPTRAPAASASSPA) is disordered. The segment covering 145-155 (AAAPTPAPIPA) has biased composition (pro residues). Low complexity-rich tracts occupy residues 156-168 (AAPS…SAPA) and 178-188 (RAPAASASSPA). One can recognise a CheB-type methylesterase domain in the interval 187–378 (PAPKRKNYKL…IGKHIVEACV (192 aa)). Active-site residues include S202, H229, and D322.

The protein belongs to the CheB family. Post-translationally, phosphorylated by CheA. Phosphorylation of the N-terminal regulatory domain activates the methylesterase activity.

It localises to the cytoplasm. The enzyme catalyses [protein]-L-glutamate 5-O-methyl ester + H2O = L-glutamyl-[protein] + methanol + H(+). It carries out the reaction L-glutaminyl-[protein] + H2O = L-glutamyl-[protein] + NH4(+). Its function is as follows. Involved in chemotaxis. Part of a chemotaxis signal transduction system that modulates chemotaxis in response to various stimuli. Catalyzes the demethylation of specific methylglutamate residues introduced into the chemoreceptors (methyl-accepting chemotaxis proteins or MCP) by CheR. Also mediates the irreversible deamidation of specific glutamine residues to glutamic acid. The chain is Protein-glutamate methylesterase/protein-glutamine glutaminase 2 from Pseudomonas fluorescens (strain Pf0-1).